Consider the following 249-residue polypeptide: Cis-4-hydroxycyclohexanecarboxylate dehydrogenase (249 aa).

Residues D38, D63, V64, N90, Y156, K160, A189, and T191 each contribute to the NAD(+) site. Y156 (proton acceptor) is an active-site residue.

The protein belongs to the short-chain dehydrogenases/reductases (SDR) family. Homotetramer.

The enzyme catalyses cis-4-hydroxycyclohexane-1-carboxylate + NAD(+) = 4-oxocyclohexane-1-carboxylate + NADH + H(+). In terms of biological role, dehydrogenase involved in a cyclohexanecarboxylate (CHCA) degradation pathway. Catalyzes the NAD(+)-dependent dehydrogenation of cis-4-hydroxycyclohexanecarboxylate (cis-4-hydroxyCHCA) to form 4-oxocyclohexanecarboxylate (4-oxoCHCA). Is highly specific for the cis-4-hydroxy derivative and shows only weak activity with trans-4-hydroxyCHCA. Cannot use NADP(+). The polypeptide is Cis-4-hydroxycyclohexanecarboxylate dehydrogenase (Sinomonas cyclohexanicum (Corynebacterium cyclohexanicum)).